The following is a 200-amino-acid chain: Small ribosomal subunit protein mS38 (200 aa).

This sequence belongs to the mitochondrion-specific ribosomal protein mS38 family. Component of the mitochondrial ribosome small subunit (28S) which comprises a 12S rRNA and about 30 distinct proteins. Interacts with Aurora-A. Ubiquitously expressed and especially highly expressed in heart, skeletal muscle and testis.

It is found in the mitochondrion matrix. Its subcellular location is the nucleus. May act as a negative regulator of Aurora-A kinase, by down-regulation through proteasome-dependent degradation. In Mus musculus (Mouse), this protein is Small ribosomal subunit protein mS38 (Aurkaip1).